The following is a 347-amino-acid chain: Fe(2+) transport protein 1 (347 aa).

An N-terminal signal peptide occupies residues Met1–Ala22. Over Ile23–Lys52 the chain is Extracellular. A helical membrane pass occupies residues Val53–Ser73. The Cytoplasmic segment spans residues Arg74–Asn84. The chain crosses the membrane as a helical span at residues Ile85–Val105. The Extracellular segment spans residues Leu106–Lys125. A helical transmembrane segment spans residues Phe126–Met146. Residues Ala147–Arg192 lie on the Cytoplasmic side of the membrane. Glycyl lysine isopeptide (Lys-Gly) (interchain with G-Cter in ubiquitin) cross-links involve residues Lys154 and Lys179. A helical transmembrane segment spans residues Val193–Leu213. Residues Gly214–Gly224 are Extracellular-facing. The chain crosses the membrane as a helical span at residues Leu225–Leu245. Residues Gln246–Lys254 are Cytoplasmic-facing. A helical membrane pass occupies residues Phe255–Leu275. Residues Ser276 to Ala286 are Extracellular-facing. Residues Leu287–Val307 traverse the membrane as a helical segment. Residues Asp308–Gln326 are Cytoplasmic-facing. A helical membrane pass occupies residues Phe327 to Ala347.

The protein belongs to the ZIP transporter (TC 2.A.5) family. Interacts with FREE1. Monoubiquitinated on several Lys residues. Monoubiquitination controls trafficking from the plasma membrane and targeting to the vacuole. In terms of tissue distribution, expressed in the external cell layers of the root including the lateral branching zone. Also detected in flowers before pollination.

Its subcellular location is the cell membrane. It localises to the early endosome. It is found in the golgi apparatus. The protein resides in the trans-Golgi network. The protein localises to the vacuole. In terms of biological role, high-affinity iron transporter that plays a key role in the uptake of iron from the rhizosphere across the plasma membrane in the root epidermal layer. Acts as the principal regulator of iron homeostasis in planta. Also mediates the heavy metals uptake under iron-deficiency by its ability to transport cobalt, cadmium, manganese and/or zinc ions. The sequence is that of Fe(2+) transport protein 1 (IRT1) from Arabidopsis thaliana (Mouse-ear cress).